Consider the following 149-residue polypeptide: Large ribosomal subunit protein bL9 (149 aa).

The protein belongs to the bacterial ribosomal protein bL9 family.

Binds to the 23S rRNA. In Teredinibacter turnerae (strain ATCC 39867 / T7901), this protein is Large ribosomal subunit protein bL9.